Here is a 495-residue protein sequence, read N- to C-terminus: Anaerobic nitric oxide reductase flavorubredoxin (495 aa).

The interval 30–210 is zinc metallo-hydrolase; sequence HKGTSYNSYL…PFSPLVTAKI (181 aa). Fe cation is bound by residues His79, Glu81, Asp83, His147, Asp166, and His227. The Flavodoxin-like domain occupies 254–393; the sequence is ITLFYDSMSN…ECREHGRQLA (140 aa). FMN is bound by residues 260-264 and 342-369; these read SMSNN and AFGS…DISI. The Rubredoxin-like domain maps to 438–489; that stretch reads DQAMLCTVCQWVYDPAQGEPDQLVAPGTPWAQVPDSFLCPGCGIGKEVFEPC. Cys443, Cys446, Cys476, and Cys479 together coordinate Fe cation.

The protein in the N-terminal section; belongs to the zinc metallo-hydrolase group 3 family. In terms of assembly, homotetramer. It depends on Fe cation as a cofactor. FMN serves as cofactor.

The protein resides in the cytoplasm. It participates in nitrogen metabolism; nitric oxide reduction. Functionally, anaerobic nitric oxide reductase; uses NADH to detoxify nitric oxide (NO), protecting several 4Fe-4S NO-sensitive enzymes. Has at least 2 reductase partners, only one of which (NorW, flavorubredoxin reductase) has been identified. NO probably binds to the di-iron center; electrons enter from the NorW at rubredoxin and are transferred sequentially to the FMN center and the di-iron center. Also able to function as an aerobic oxygen reductase. The protein is Anaerobic nitric oxide reductase flavorubredoxin of Aeromonas hydrophila subsp. hydrophila (strain ATCC 7966 / DSM 30187 / BCRC 13018 / CCUG 14551 / JCM 1027 / KCTC 2358 / NCIMB 9240 / NCTC 8049).